A 297-amino-acid chain; its full sequence is 4-hydroxy-tetrahydrodipicolinate synthase (297 aa).

Threonine 49 provides a ligand contact to pyruvate. The Proton donor/acceptor role is filled by tyrosine 137. Catalysis depends on lysine 166, which acts as the Schiff-base intermediate with substrate. Isoleucine 208 lines the pyruvate pocket.

This sequence belongs to the DapA family. As to quaternary structure, homotetramer; dimer of dimers.

It localises to the cytoplasm. The enzyme catalyses L-aspartate 4-semialdehyde + pyruvate = (2S,4S)-4-hydroxy-2,3,4,5-tetrahydrodipicolinate + H2O + H(+). Its pathway is amino-acid biosynthesis; L-lysine biosynthesis via DAP pathway; (S)-tetrahydrodipicolinate from L-aspartate: step 3/4. Its function is as follows. Catalyzes the condensation of (S)-aspartate-beta-semialdehyde [(S)-ASA] and pyruvate to 4-hydroxy-tetrahydrodipicolinate (HTPA). The polypeptide is 4-hydroxy-tetrahydrodipicolinate synthase (Chlorobium phaeobacteroides (strain BS1)).